A 385-amino-acid polypeptide reads, in one-letter code: Acetylornithine aminotransferase (385 aa).

Pyridoxal 5'-phosphate is bound by residues G95–A96 and F122. R125 is a N(2)-acetyl-L-ornithine binding site. D208 to Q211 is a pyridoxal 5'-phosphate binding site. The residue at position 237 (K237) is an N6-(pyridoxal phosphate)lysine. T265 is a N(2)-acetyl-L-ornithine binding site. T266 contributes to the pyridoxal 5'-phosphate binding site.

The protein belongs to the class-III pyridoxal-phosphate-dependent aminotransferase family. ArgD subfamily. In terms of assembly, homodimer. Pyridoxal 5'-phosphate is required as a cofactor.

It is found in the cytoplasm. The enzyme catalyses N(2)-acetyl-L-ornithine + 2-oxoglutarate = N-acetyl-L-glutamate 5-semialdehyde + L-glutamate. The protein operates within amino-acid biosynthesis; L-arginine biosynthesis; N(2)-acetyl-L-ornithine from L-glutamate: step 4/4. This Bacillus subtilis (strain 168) protein is Acetylornithine aminotransferase.